The sequence spans 144 residues: Globin-1 (144 aa).

Positions 1 to 141 (VSANDIKNVQ…ILHQMSSYFA (141 aa)) constitute a Globin domain. Residue H89 coordinates heme b.

Belongs to the globin family. As to quaternary structure, homodimer.

This Phreagena soyoae (Deep-sea cold-seep clam) protein is Globin-1.